Here is a 531-residue protein sequence, read N- to C-terminus: Polypyrimidine tract-binding protein 2 (531 aa).

Met-1 bears the N-acetylmethionine mark. Phosphoserine is present on residues Ser-26 and Ser-27. 2 consecutive RRM domains span residues 59–133 and 181–257; these read RVLH…YSNH and LRII…FSKL. Ser-308 bears the Phosphoserine mark. RRM domains are found at residues 338 to 412 and 455 to 529; these read TVLL…LSKH and ATLH…FSKS.

Monomer. Interacts with NOVA1; the interaction is direct. Identified in a mRNP complex, at least composed of DHX9, DDX3X, ELAVL1, HNRNPU, IGF2BP1, ILF3, PABPC1, PCBP2, PTBP2, STAU1, STAU2, SYNCRIP and YBX1. Part of a ternary complex containing KHSRP and HNRPH1. Interacts with NOVA2; the interaction is direct. In terms of tissue distribution, mainly expressed in brain although also detected in other tissues like heart and skeletal muscle. Isoform 1 and isoform 2 are specifically expressed in neuronal tissues. Isoform 3 and isoform 4 are expressed in non-neuronal tissues. Isoform 5 and isoform 6 are truncated forms expressed in non-neuronal tissues.

It is found in the nucleus. Functionally, RNA-binding protein which binds to intronic polypyrimidine tracts and mediates negative regulation of exons splicing. May antagonize in a tissue-specific manner the ability of NOVA1 to activate exon selection. In addition to its function in pre-mRNA splicing, plays also a role in the regulation of translation. Reduced affinity for RNA. The chain is Polypyrimidine tract-binding protein 2 from Homo sapiens (Human).